A 601-amino-acid polypeptide reads, in one-letter code: Glutathione-regulated potassium-efflux system protein KefB (601 aa).

Helical transmembrane passes span 4–24, 29–49, 55–75, 87–107, 115–135, 152–172, 177–197, 207–227, 230–250, 268–288, 291–311, 324–344, and 356–376; these read SDFL…VPLA, IGAV…GLGF, EILH…GLEL, IFGV…GLLM, AAVV…LQLM, VLLF…LLAG, HFDW…LIGG, FIAA…LVLG, LFMD…GVLL, GLLL…GVLY, LLWV…VLYL, MQFA…FSTA, and ALLL…MKLV. The RCK N-terminal domain maps to 400 to 519; sequence KPQVIVVGFG…AGVTQFSRET (120 aa).

This sequence belongs to the monovalent cation:proton antiporter 2 (CPA2) transporter (TC 2.A.37) family. KefB subfamily. Interacts with the regulatory subunit KefG.

The protein resides in the cell inner membrane. Functionally, pore-forming subunit of a potassium efflux system that confers protection against electrophiles. Catalyzes K(+)/H(+) antiport. This is Glutathione-regulated potassium-efflux system protein KefB from Shigella sonnei (strain Ss046).